We begin with the raw amino-acid sequence, 270 residues long: 3-methyl-2-oxobutanoate hydroxymethyltransferase (270 aa).

Positions 41 and 80 each coordinate Mg(2+). 3-methyl-2-oxobutanoate-binding positions include 41-42, D80, and K109; that span reads DS. E111 contacts Mg(2+). The Proton acceptor role is filled by E178.

The protein belongs to the PanB family. Homodecamer; pentamer of dimers. It depends on Mg(2+) as a cofactor.

The protein resides in the cytoplasm. The catalysed reaction is 3-methyl-2-oxobutanoate + (6R)-5,10-methylene-5,6,7,8-tetrahydrofolate + H2O = 2-dehydropantoate + (6S)-5,6,7,8-tetrahydrofolate. The protein operates within cofactor biosynthesis; (R)-pantothenate biosynthesis; (R)-pantoate from 3-methyl-2-oxobutanoate: step 1/2. In terms of biological role, catalyzes the reversible reaction in which hydroxymethyl group from 5,10-methylenetetrahydrofolate is transferred onto alpha-ketoisovalerate to form ketopantoate. The polypeptide is 3-methyl-2-oxobutanoate hydroxymethyltransferase (Thermotoga sp. (strain RQ2)).